Here is a 229-residue protein sequence, read N- to C-terminus: Protein-lysine N-methyltransferase EFM4 (229 aa).

This sequence belongs to the class I-like SAM-binding methyltransferase superfamily. EFM4 family.

The protein resides in the cytoplasm. The enzyme catalyses L-lysyl-[protein] + S-adenosyl-L-methionine = N(6)-methyl-L-lysyl-[protein] + S-adenosyl-L-homocysteine + H(+). It catalyses the reaction N(6)-methyl-L-lysyl-[protein] + S-adenosyl-L-methionine = N(6),N(6)-dimethyl-L-lysyl-[protein] + S-adenosyl-L-homocysteine + H(+). In terms of biological role, S-adenosyl-L-methionine-dependent protein-lysine N-methyltransferase that mono- and dimethylates elongation factor 1-alpha (TEF1 and TEF2) at 'Lys-316'. May play a role in intracellular transport. This is Protein-lysine N-methyltransferase EFM4 from Saccharomyces cerevisiae (strain ATCC 204508 / S288c) (Baker's yeast).